The following is a 502-amino-acid chain: MEEIQRYLQLDRSQQHDCLYPLIFQEYIYALAHDHGLNRSILLENPGYDNKSSLLIVKRLITRMYQQNHFFISVNDSNQDQFFGRNKNLYSQMISEGFAFIVEMTFSLRLISSLEGKEIFKSHNLRSIHSIFPFLEDNFSHLNCVLDILIPHPVHPEILVQTLRFWVKDASSLHLLRFFLHEYWNNLITLKKPSSSFSKRNQRLFFFLYNSHVCEYESIFVFLRNQSSHLRSTSFGALLERIYFYGKIERLVEVFAKDFQATLWLFKDPFIHYVRYQGKLILASKGTPLLMNKWKYYLVNFWQCYFYLWSRPGRIYINQLSNHSLDFMGYLSSVRLNPSMVRSQMLENAFLVNNVIKKFDTLLPIIPLIGSLAKAKFCNILGNPISKPVRADLSDSDIIDRFGRICRNLSHYHSGSSKKKSLYRIKYILRLSCAKTLARKHKSSVRAFLKRFGSGLLEEFLTSEEQVLSLTFPRASSTLWGVYRSRIWYLDIICINDLANHQ.

The protein belongs to the intron maturase 2 family. MatK subfamily.

Its subcellular location is the plastid. The protein localises to the chloroplast. Usually encoded in the trnK tRNA gene intron. Probably assists in splicing its own and other chloroplast group II introns. This is Maturase K from Ehretia anacua (Sandpaper tree).